The chain runs to 323 residues: tRNA U34 carboxymethyltransferase (323 aa).

Residues K91, W105, K110, G130, 152–154 (DPT), 181–182 (IE), M196, Y200, and R315 each bind carboxy-S-adenosyl-L-methionine.

This sequence belongs to the class I-like SAM-binding methyltransferase superfamily. CmoB family. In terms of assembly, homotetramer.

It carries out the reaction carboxy-S-adenosyl-L-methionine + 5-hydroxyuridine(34) in tRNA = 5-carboxymethoxyuridine(34) in tRNA + S-adenosyl-L-homocysteine + H(+). In terms of biological role, catalyzes carboxymethyl transfer from carboxy-S-adenosyl-L-methionine (Cx-SAM) to 5-hydroxyuridine (ho5U) to form 5-carboxymethoxyuridine (cmo5U) at position 34 in tRNAs. In Escherichia coli O8 (strain IAI1), this protein is tRNA U34 carboxymethyltransferase.